The sequence spans 261 residues: MVNIPKSHPRYWSLYYREKIIEGMEKGMTAKAGLIAHGRGEAFDYLIGERTIEPAERAMRAAVAKFLLAEHPVISVNGNVAALVPKETIELAKALNAKLEINLFYRTEERVRTIAEELRKYDPEIEILGINPTKRIPGLEHERGKVDENGIWKADVVLVPLEDGDRTEALVRMGKFVVTVDLNPLSRSARMADITIVDNIVRAYPRMVELAREMKDYSREELLKIVGEYDNGKTLSDVLLHIRDRLTRLAEEGIWRRKELE.

ATP-binding positions include R17, R39, 181–183, 187–188, and 199–200; these read DLN, RS, and NI.

It belongs to the archaeal phosphopantothenate synthetase family. As to quaternary structure, homodimer.

The catalysed reaction is (R)-4-phosphopantoate + beta-alanine + ATP = (R)-4'-phosphopantothenate + AMP + diphosphate + H(+). The protein operates within cofactor biosynthesis; coenzyme A biosynthesis. With respect to regulation, activity is not affected by 4'-phosphopantothenate or CoA/acetyl-CoA. Catalyzes the condensation of (R)-4-phosphopantoate and beta-alanine to 4'-phosphopantothenate in the CoA biosynthesis pathway. Cannot use (R)-pantoate as substrate and thus does not display pantothenate synthetase (PS) activity. Displays strict specificity for its natural substrates, 4-phosphopantoate, ATP and beta-alanine. The protein is 4-phosphopantoate--beta-alanine ligase of Thermococcus kodakarensis (strain ATCC BAA-918 / JCM 12380 / KOD1) (Pyrococcus kodakaraensis (strain KOD1)).